The primary structure comprises 201 residues: Peptide deformylase (201 aa).

Positions 1–17 (MANNFSQLARKSKTNSP) are enriched in polar residues. A disordered region spans residues 1 to 24 (MANNFSQLARKSKTNSPIEKVSKE). Positions 121 and 163 each coordinate Fe cation. Residue Glu164 is part of the active site. His167 lines the Fe cation pocket.

The protein belongs to the polypeptide deformylase family. It depends on Fe(2+) as a cofactor.

The catalysed reaction is N-terminal N-formyl-L-methionyl-[peptide] + H2O = N-terminal L-methionyl-[peptide] + formate. Functionally, removes the formyl group from the N-terminal Met of newly synthesized proteins. Requires at least a dipeptide for an efficient rate of reaction. N-terminal L-methionine is a prerequisite for activity but the enzyme has broad specificity at other positions. The sequence is that of Peptide deformylase from Prochlorococcus marinus subsp. pastoris (strain CCMP1986 / NIES-2087 / MED4).